A 214-amino-acid chain; its full sequence is MRFLIDTANVEEIREIHEWGVLAGVTTNPSLVAKEGRDFVETLKEILDIVDGPISAEVISTDAKGMIEEGEKLAALSKNIVIKLPMTAEGLKATKYFAKRKIRTNVTLVFSANQALLAARAGASFVSPFLGRLDDIGQDGMQLIEDIAEIFSVHGIDTEIIAASVRHPVHVTEAARRGSHFATIPAKVFKQLIAHPLTDSGLEKFLADWASMQK.

Lys-83 functions as the Schiff-base intermediate with substrate in the catalytic mechanism.

Belongs to the transaldolase family. Type 3B subfamily.

The protein localises to the cytoplasm. It catalyses the reaction D-sedoheptulose 7-phosphate + D-glyceraldehyde 3-phosphate = D-erythrose 4-phosphate + beta-D-fructose 6-phosphate. The protein operates within carbohydrate degradation; pentose phosphate pathway; D-glyceraldehyde 3-phosphate and beta-D-fructose 6-phosphate from D-ribose 5-phosphate and D-xylulose 5-phosphate (non-oxidative stage): step 2/3. Its function is as follows. Transaldolase is important for the balance of metabolites in the pentose-phosphate pathway. This chain is Probable transaldolase, found in Brevibacillus brevis (strain 47 / JCM 6285 / NBRC 100599).